A 284-amino-acid polypeptide reads, in one-letter code: Acetyl-coenzyme A carboxylase carboxyl transferase subunit beta (284 aa).

Positions 25–284 (MWVKCPGCSA…ILGILYRPAA (260 aa)) constitute a CoA carboxyltransferase N-terminal domain. Residues cysteine 29, cysteine 32, cysteine 48, and cysteine 51 each coordinate Zn(2+). The C4-type zinc-finger motif lies at 29 to 51 (CPGCSATLLAKDLDANLNVCPTC).

Belongs to the AccD/PCCB family. As to quaternary structure, acetyl-CoA carboxylase is a heterohexamer composed of biotin carboxyl carrier protein (AccB), biotin carboxylase (AccC) and two subunits each of ACCase subunit alpha (AccA) and ACCase subunit beta (AccD). It depends on Zn(2+) as a cofactor.

The protein localises to the cytoplasm. The catalysed reaction is N(6)-carboxybiotinyl-L-lysyl-[protein] + acetyl-CoA = N(6)-biotinyl-L-lysyl-[protein] + malonyl-CoA. It participates in lipid metabolism; malonyl-CoA biosynthesis; malonyl-CoA from acetyl-CoA: step 1/1. Its function is as follows. Component of the acetyl coenzyme A carboxylase (ACC) complex. Biotin carboxylase (BC) catalyzes the carboxylation of biotin on its carrier protein (BCCP) and then the CO(2) group is transferred by the transcarboxylase to acetyl-CoA to form malonyl-CoA. This chain is Acetyl-coenzyme A carboxylase carboxyl transferase subunit beta, found in Pelobacter propionicus (strain DSM 2379 / NBRC 103807 / OttBd1).